Consider the following 295-residue polypeptide: Protoheme IX farnesyltransferase 2 (295 aa).

Helical transmembrane passes span 9-29 (ITKP…FFLA), 36-56 (FALF…GCVF), 83-103 (LTLA…LLYV), 108-128 (LAAF…SLWL), 135-155 (GTLV…CAVS), 163-183 (VTLL…IAIF), 209-229 (IVLY…GGYA), 230-250 (GLGY…MAWG), and 264-284 (VFGF…VDSQ).

It belongs to the UbiA prenyltransferase family. Protoheme IX farnesyltransferase subfamily.

It localises to the cell inner membrane. It catalyses the reaction heme b + (2E,6E)-farnesyl diphosphate + H2O = Fe(II)-heme o + diphosphate. It participates in porphyrin-containing compound metabolism; heme O biosynthesis; heme O from protoheme: step 1/1. Converts heme B (protoheme IX) to heme O by substitution of the vinyl group on carbon 2 of heme B porphyrin ring with a hydroxyethyl farnesyl side group. In Pseudomonas entomophila (strain L48), this protein is Protoheme IX farnesyltransferase 2.